The sequence spans 240 residues: Tetrahydromethanopterin S-methyltransferase subunit A (240 aa).

Topologically, residues 1-218 (MVDKKEPASG…KFHSGVHAGK (218 aa)) are cytoplasmic. His85 contributes to the 5-hydroxybenzimidazolylcob(I)amide binding site. The helical transmembrane segment at 219–239 (IEGAMIGLTVTISLLGLLLLG) threads the bilayer. Residue Arg240 is a topological domain, extracellular.

Belongs to the MtrA family. The complex is composed of 8 subunits; MtrA, MtrB, MtrC, MtrD, MtrE, MtrF, MtrG and MtrH. Requires 5-hydroxybenzimidazolylcob(I)amide as cofactor.

The protein resides in the cell membrane. The catalysed reaction is 5-methyl-5,6,7,8-tetrahydromethanopterin + coenzyme M + 2 Na(+)(in) = 5,6,7,8-tetrahydromethanopterin + methyl-coenzyme M + 2 Na(+)(out). Its pathway is one-carbon metabolism; methanogenesis from CO(2); methyl-coenzyme M from 5,10-methylene-5,6,7,8-tetrahydromethanopterin: step 2/2. In terms of biological role, part of a complex that catalyzes the formation of methyl-coenzyme M and tetrahydromethanopterin from coenzyme M and methyl-tetrahydromethanopterin. This is an energy-conserving, sodium-ion translocating step. This Methanosarcina acetivorans (strain ATCC 35395 / DSM 2834 / JCM 12185 / C2A) protein is Tetrahydromethanopterin S-methyltransferase subunit A.